Reading from the N-terminus, the 447-residue chain is ATP-dependent protease ATPase subunit HslU (447 aa).

Residues I18, 60 to 65, D259, E325, and R397 contribute to the ATP site; that span reads GVGKTE.

Belongs to the ClpX chaperone family. HslU subfamily. As to quaternary structure, a double ring-shaped homohexamer of HslV is capped on each side by a ring-shaped HslU homohexamer. The assembly of the HslU/HslV complex is dependent on binding of ATP.

Its subcellular location is the cytoplasm. Its function is as follows. ATPase subunit of a proteasome-like degradation complex; this subunit has chaperone activity. The binding of ATP and its subsequent hydrolysis by HslU are essential for unfolding of protein substrates subsequently hydrolyzed by HslV. HslU recognizes the N-terminal part of its protein substrates and unfolds these before they are guided to HslV for hydrolysis. This is ATP-dependent protease ATPase subunit HslU from Burkholderia pseudomallei (strain K96243).